The following is a 225-amino-acid chain: Ribosomal RNA small subunit methyltransferase G (225 aa).

S-adenosyl-L-methionine-binding positions include Gly-71, Leu-76, 121 to 122 (AE), and Arg-139. Positions 204-225 (VVEARRATPSNGRGRPGRSSRR) are disordered.

It belongs to the methyltransferase superfamily. RNA methyltransferase RsmG family.

The protein resides in the cytoplasm. Its function is as follows. Specifically methylates the N7 position of guanine in position 518 of 16S rRNA. The chain is Ribosomal RNA small subunit methyltransferase G from Mycobacterium sp. (strain KMS).